A 244-amino-acid chain; its full sequence is Small ribosomal subunit protein eS4 (244 aa).

Positions 1 to 14 (MANKGPRKHLKRLP) are enriched in basic residues. A disordered region spans residues 1–36 (MANKGPRKHLKRLPAPKNWQISRKTNKYTTRPSAGP). The span at 19–32 (WQISRKTNKYTTRP) shows a compositional bias: polar residues. Residues 43–106 (LPLLLVLRDL…NESFLVVLDE (64 aa)) enclose the S4 RNA-binding domain.

It belongs to the eukaryotic ribosomal protein eS4 family.

The polypeptide is Small ribosomal subunit protein eS4 (Methanococcus aeolicus (strain ATCC BAA-1280 / DSM 17508 / OCM 812 / Nankai-3)).